A 229-amino-acid polypeptide reads, in one-letter code: Large ribosomal subunit protein uL1 (229 aa).

The protein belongs to the universal ribosomal protein uL1 family. Part of the 50S ribosomal subunit.

Its function is as follows. Binds directly to 23S rRNA. The L1 stalk is quite mobile in the ribosome, and is involved in E site tRNA release. Functionally, protein L1 is also a translational repressor protein, it controls the translation of the L11 operon by binding to its mRNA. The protein is Large ribosomal subunit protein uL1 of Staphylococcus aureus (strain MRSA252).